The chain runs to 298 residues: Acetylglutamate kinase (298 aa).

Residues 69-70 (GG), R91, and N191 each bind substrate.

It belongs to the acetylglutamate kinase family. ArgB subfamily.

It is found in the cytoplasm. It catalyses the reaction N-acetyl-L-glutamate + ATP = N-acetyl-L-glutamyl 5-phosphate + ADP. The protein operates within amino-acid biosynthesis; L-arginine biosynthesis; N(2)-acetyl-L-ornithine from L-glutamate: step 2/4. Functionally, catalyzes the ATP-dependent phosphorylation of N-acetyl-L-glutamate. In Neisseria meningitidis serogroup C (strain 053442), this protein is Acetylglutamate kinase.